Consider the following 474-residue polypeptide: Serine/threonine-protein kinase VRK3 (474 aa).

The span at 41–58 (HVSSFQGSKRGLNSSFET) shows a compositional bias: polar residues. A disordered region spans residues 41 to 152 (HVSSFQGSKR…SRVTTSLEAL (112 aa)). Positions 49-64 (KRGLNSSFETSPKKVK) match the Nuclear localization signal motif. Phosphoserine occurs at positions 54, 55, 59, 82, 83, and 90. The span at 88 to 101 (TLSSSERSKGSGSR) shows a compositional bias: low complexity. Polar residues predominate over residues 107 to 149 (SSPQKTRKSPQVTRGSPQKTSCSPQKTRQSPQTLKRSRVTTSL). At Ser-108 the chain carries Phosphoserine; by CDK5. A phosphoserine mark is found at Ser-115 and Ser-122. The Protein kinase domain maps to 166 to 457 (WKLKSFQTRD…MLRNNLEALL (292 aa)).

Belongs to the protein kinase superfamily. CK1 Ser/Thr protein kinase family. VRK subfamily. Interacts with DUSP3. Interacts with RAN. Interacts with HSP70/HSPA1A. In terms of processing, phosphorylated at Ser-108 by CDK5; leading to protection of the cell against H2O2-induced apoptosis. Post-translationally, ubiquitinated by RNF144A.

The protein localises to the nucleus. Its subcellular location is the cytoplasm. The enzyme catalyses L-seryl-[protein] + ATP = O-phospho-L-seryl-[protein] + ADP + H(+). Its function is as follows. Plays a role in the regulation of the cell cycle by phosphorylating the nuclear envelope protein barrier-to-autointegration factor/BAF that is required for disassembly and reassembly, respectively, of the nuclear envelope during mitosis. Under normal physiological conditions, negatively regulates ERK activity along with VHR/DUSP3 phosphatase in the nucleus, causing timely and transient action of ERK. Stress conditions activate CDK5 which phosphorylates VRK3 to increase VHR phosphatase activity and suppress prolonged ERK activation that causes cell death. For example, upon glutamate induction, promotes nuclear localization of HSP70/HSPA1A to inhibit ERK activation via VHR/DUSP3 phosphatase. This is Serine/threonine-protein kinase VRK3 (VRK3) from Homo sapiens (Human).